A 1544-amino-acid chain; its full sequence is Transcriptional activator GLI3 (1544 aa).

Polar residues-rich tracts occupy residues 1–10 (MEAQSHSSTT) and 402–429 (NPVQ…SSTG). Disordered stretches follow at residues 1 to 83 (MEAQ…EERA) and 373 to 477 (SAFG…QEPE). The span at 463–476 (VKEEGDKDESKQEP) shows a compositional bias: basic and acidic residues. The C2H2-type 1 zinc finger occupies 482–509 (TNCHWEGCSREFDTQEQLVHHINNDHIH). Residues 520–542 (LDCSREQKPFKAQYMLVVHMRRH) form a C2H2-type 2; degenerate zinc finger. 3 consecutive C2H2-type zinc fingers follow at residues 548–572 (HKCT…LRSH), 578–603 (YVCE…NRTH), and 609–634 (YVCK…KTVH). Disordered regions lie at residues 622–728 (DPSS…YSNN), 865–919 (RSSG…DLPS), 1126–1155 (SVVL…VSKS), and 1327–1368 (HYQG…GNQS). Over residues 634-650 (HGPEAHVTKKQRGDIHP) the composition is skewed to basic and acidic residues. A compositionally biased stretch (polar residues) spans 660–685 (SHSQTRSPGQQTQGATGEQKDLNSTT). Residues 686 to 701 (SRREECLQVKAVKSEK) are compositionally biased toward basic and acidic residues. A compositionally biased stretch (polar residues) spans 702 to 728 (PMTSQPSPGGQSTCSSEQSPISNYSNN). Over residues 865 to 882 (RSSGISPCFSSRRSSDAS) the composition is skewed to low complexity. Positions 1330–1355 (GVNQSSPMTLGQVSPTSQSSLHQGPQ) are enriched in polar residues.

The protein belongs to the GLI C2H2-type zinc-finger protein family. In terms of processing, phosphorylation is essential for its proteolytic processing. The repressor form (GLI3R), a C-terminally truncated form is generated from the full-length GLI3 protein (GLI3FL) through proteolytic processing.

Its subcellular location is the nucleus. The protein localises to the cytoplasm. Has a dual function as a transcriptional activator and a repressor of the sonic hedgehog (Shh) pathway, and plays a role in limb development. The full-length GLI3 form (GLI3FL) acts as an activator (GLI3A) while GLI3R, its C-terminally truncated form, acts as a repressor. This Gallus gallus (Chicken) protein is Transcriptional activator GLI3 (GLI3).